Here is a 429-residue protein sequence, read N- to C-terminus: Antho-RFamide neuropeptides type 2 (429 aa).

An N-terminal signal peptide occupies residues 1–22 (MTTVSYVTILLTVLVQVLTSDA). A propeptide spanning residues 23–233 (KATNNKRELS…EFQGRFGRED (211 aa)) is cleaved from the precursor. The span at 230–371 (GREDQGRFGR…EDIAKEDQGR (142 aa)) shows a compositional bias: basic and acidic residues. The interval 230-429 (GREDQGRFGR…KSDDALAKIS (200 aa)) is disordered. Gln234 bears the Pyrrolidone carboxylic acid mark. Phe237 is subject to Phenylalanine amide. The propeptide occupies 239 to 241 (RED). Residue Gln242 is modified to Pyrrolidone carboxylic acid. Residue Phe245 is modified to Phenylalanine amide. The propeptide occupies 247 to 249 (RED). Gln250 is modified (pyrrolidone carboxylic acid). Phe253 is modified (phenylalanine amide). Positions 255–257 (RED) are excised as a propeptide. Gln258 is modified (pyrrolidone carboxylic acid). Phe261 is modified (phenylalanine amide). A propeptide spanning residues 263-265 (RED) is cleaved from the precursor. The residue at position 266 (Gln266) is a Pyrrolidone carboxylic acid. A Phenylalanine amide modification is found at Phe269. The propeptide occupies 271–273 (RED). A Pyrrolidone carboxylic acid modification is found at Gln274. Position 277 is a phenylalanine amide (Phe277). Residues 279-289 (RELQGRFGRED) constitute a propeptide that is removed on maturation. Residue Gln290 is modified to Pyrrolidone carboxylic acid. Position 293 is a phenylalanine amide (Phe293). Residues 295–297 (RED) constitute a propeptide that is removed on maturation. Gln298 bears the Pyrrolidone carboxylic acid mark. Phe301 bears the Phenylalanine amide mark. The propeptide occupies 303–305 (RED). At Gln306 the chain carries Pyrrolidone carboxylic acid. At Phe309 the chain carries Phenylalanine amide. Residues 311–321 (RELQGRFGRED) constitute a propeptide that is removed on maturation. Residue Gln322 is modified to Pyrrolidone carboxylic acid. At Phe325 the chain carries Phenylalanine amide. Residues 327–329 (RED) constitute a propeptide that is removed on maturation. Gln330 bears the Pyrrolidone carboxylic acid mark. Phe333 bears the Phenylalanine amide mark. Residues 335-342 (REDLAKED) constitute a propeptide that is removed on maturation. Gln343 bears the Pyrrolidone carboxylic acid mark. Phe346 bears the Phenylalanine amide mark. The propeptide occupies 348–355 (REDLAKED). The residue at position 356 (Gln356) is a Pyrrolidone carboxylic acid. Phe359 carries the phenylalanine amide modification. A propeptide spanning residues 361–368 (REDIAKED) is cleaved from the precursor. Residue Gln369 is modified to Pyrrolidone carboxylic acid. At Phe372 the chain carries Phenylalanine amide. A propeptide spanning residues 374–429 (RNAAAAAKKRTIDVIDIESDPKPQTRFRDGKDMQEKRKVEKKDKIEKSDDALAKIS) is cleaved from the precursor. The segment covering 392–429 (SDPKPQTRFRDGKDMQEKRKVEKKDKIEKSDDALAKIS) has biased composition (basic and acidic residues).

The protein belongs to the FARP (FMRFamide related peptide) family.

It localises to the secreted. Functionally, not known but it could act as a transmitter at neuromuscular synapses. The chain is Antho-RFamide neuropeptides type 2 from Anthopleura elegantissima (Green aggregating anemone).